The following is a 155-amino-acid chain: Ribosome maturation factor RimP (155 aa).

The protein belongs to the RimP family.

It is found in the cytoplasm. Functionally, required for maturation of 30S ribosomal subunits. This is Ribosome maturation factor RimP from Prochlorococcus marinus (strain AS9601).